The chain runs to 168 residues: Peptide deformylase (168 aa).

Positions 92 and 134 each coordinate Fe cation. Glu135 is an active-site residue. Position 138 (His138) interacts with Fe cation.

This sequence belongs to the polypeptide deformylase family. Requires Fe(2+) as cofactor.

It catalyses the reaction N-terminal N-formyl-L-methionyl-[peptide] + H2O = N-terminal L-methionyl-[peptide] + formate. Removes the formyl group from the N-terminal Met of newly synthesized proteins. Requires at least a dipeptide for an efficient rate of reaction. N-terminal L-methionine is a prerequisite for activity but the enzyme has broad specificity at other positions. This Pseudomonas aeruginosa (strain ATCC 15692 / DSM 22644 / CIP 104116 / JCM 14847 / LMG 12228 / 1C / PRS 101 / PAO1) protein is Peptide deformylase.